Reading from the N-terminus, the 336-residue chain is Methionine import ATP-binding protein MetN (336 aa).

Residues Ile2 to Gly254 form the ABC transporter domain. Gly34–Ser41 serves as a coordination point for ATP.

It belongs to the ABC transporter superfamily. Methionine importer (TC 3.A.1.24) family. As to quaternary structure, the complex is composed of two ATP-binding proteins (MetN), two transmembrane proteins (MetI) and a solute-binding protein (MetQ).

The protein resides in the cell inner membrane. The enzyme catalyses L-methionine(out) + ATP + H2O = L-methionine(in) + ADP + phosphate + H(+). It catalyses the reaction D-methionine(out) + ATP + H2O = D-methionine(in) + ADP + phosphate + H(+). Functionally, part of the ABC transporter complex MetNIQ involved in methionine import. Responsible for energy coupling to the transport system. The protein is Methionine import ATP-binding protein MetN of Campylobacter jejuni subsp. jejuni serotype O:2 (strain ATCC 700819 / NCTC 11168).